The primary structure comprises 177 residues: Large ribosomal subunit protein bL31m (177 aa).

The transit peptide at 1 to 14 (MLKSIFAKRFASTG) directs the protein to the mitochondrion. A sufficient for general mitochondrial translation region spans residues 36 to 118 (KSRPAIYHQF…FSVDSTTPNS (83 aa)). The segment at 87–177 (LVVVDANSGG…KLASKKRDKK (91 aa)) is sufficient for dosage suppression of COX2 mutation. Residues 111-123 (VDSTTPNSSSETV) show a composition bias toward polar residues. Residues 111–144 (VDSTTPNSSSETVELSEENKKKTQIKKEEKEDVS) are disordered. Positions 127-144 (EENKKKTQIKKEEKEDVS) are enriched in basic and acidic residues.

Belongs to the bacterial ribosomal protein bL31 family. Highly divergent. Component of the mitochondrial large ribosomal subunit (mt-LSU). Mature yeast 74S mitochondrial ribosomes consist of a small (37S) and a large (54S) subunit. The 37S small subunit contains a 15S ribosomal RNA (15S mt-rRNA) and 34 different proteins. The 54S large subunit contains a 21S rRNA (21S mt-rRNA) and 46 different proteins.

Its subcellular location is the mitochondrion. Component of the mitochondrial ribosome (mitoribosome), a dedicated translation machinery responsible for the synthesis of mitochondrial genome-encoded proteins, including at least some of the essential transmembrane subunits of the mitochondrial respiratory chain. The mitoribosomes are attached to the mitochondrial inner membrane and translation products are cotranslationally integrated into the membrane. Overexpression of bL31m suppresses mutations in the COX2 leader peptide-encoding and initiation codon regions. The protein is Large ribosomal subunit protein bL31m (MRPL36) of Saccharomyces cerevisiae (strain ATCC 204508 / S288c) (Baker's yeast).